The following is a 262-amino-acid chain: Small ribosomal subunit protein eS1z (262 aa).

The span at 1 to 18 shows a compositional bias: basic residues; sequence MAVGKNKRISKGRKGGKK. Residues 1–21 form a disordered region; the sequence is MAVGKNKRISKGRKGGKKKAV.

Belongs to the eukaryotic ribosomal protein eS1 family. As to quaternary structure, component of the small ribosomal subunit. Mature ribosomes consist of a small (40S) and a large (60S) subunit. The 40S subunit contains about 33 different proteins and 1 molecule of RNA (18S). The 60S subunit contains about 49 different proteins and 3 molecules of RNA (25S, 5.8S and 5S).

Its subcellular location is the cytoplasm. The chain is Small ribosomal subunit protein eS1z from Arabidopsis thaliana (Mouse-ear cress).